Consider the following 313-residue polypeptide: Beta-ribofuranosylphenol 5'-phosphate synthase (313 aa).

The protein belongs to the beta-RFA-P synthase family. In terms of assembly, homodimer.

The catalysed reaction is 5-phospho-alpha-D-ribose 1-diphosphate + 4-hydroxybenzoate + H(+) = 4-(beta-D-ribofuranosyl)phenol 5'-phosphate + CO2 + diphosphate. It carries out the reaction 4-aminobenzoate + 5-phospho-alpha-D-ribose 1-diphosphate + H(+) = 4-(beta-D-ribofuranosyl)aminobenzene 5'-phosphate + CO2 + diphosphate. The protein operates within cofactor biosynthesis; 5,6,7,8-tetrahydromethanopterin biosynthesis. Functionally, catalyzes the condensation of 4-hydroxybenzoate (HB) with 5-phospho-alpha-D-ribose 1-diphosphate (PRPP) to produce beta-ribofuranosylphenol 5'-phosphate (beta-RFH-P). Also catalyzes the condensation of 4-aminobenzoate (pABA) with PRPP to produce beta-ribofuranosylaminobenzene 5'-phosphate (beta-RFA-P). The protein is Beta-ribofuranosylphenol 5'-phosphate synthase of Archaeoglobus fulgidus (strain ATCC 49558 / DSM 4304 / JCM 9628 / NBRC 100126 / VC-16).